Reading from the N-terminus, the 458-residue chain is Fasciclin-like arabinogalactan protein 17 (458 aa).

An N-terminal signal peptide occupies residues 1 to 30 (MDRRIYGGSAVIHLFLFFSVLIFSAASALS). The FAS1 1 domain maps to 43 to 184 (NSNSVLVALL…GLIHGIERLL (142 aa)). N-linked (GlcNAc...) asparagine glycosylation occurs at Asn-80. A disordered region spans residues 207 to 262 (PEGAPEVDPRTNRLKKPAAPVPAGSPPALPIQSAMAPGPSLAPAPAPGPGGKQHHF). Pro residues predominate over residues 225-235 (APVPAGSPPAL). The FAS1 2 domain occupies 268 to 411 (VKDFIHTLLH…ISVQGIDGVL (144 aa)). Asn-290 carries N-linked (GlcNAc...) asparagine glycosylation.

This sequence belongs to the fasciclin-like AGP family.

It localises to the secreted. Its function is as follows. May be a cell surface adhesion protein. This chain is Fasciclin-like arabinogalactan protein 17 (FLA17), found in Arabidopsis thaliana (Mouse-ear cress).